A 411-amino-acid chain; its full sequence is Alpha-1-antitrypsin 1-6 (411 aa).

The signal sequence occupies residues 1–25 (MTTPFSSHGLLLLVGLCCLLLITKT). Asparagine 50, asparagine 89, asparagine 101, and asparagine 164 each carry an N-linked (GlcNAc...) asparagine glycan.

This sequence belongs to the serpin family. In terms of tissue distribution, expressed predominantly in epididymis where it is found in the epithelial cells of the caput, corpus and cauda epididymis.

It localises to the secreted. Its function is as follows. Inhibitor of serine proteases. In Mus musculus (Mouse), this protein is Alpha-1-antitrypsin 1-6.